Here is a 106-residue protein sequence, read N- to C-terminus: Large ribosomal subunit protein P1A (106 aa).

Position 2 is an N-acetylserine (Ser-2). The interval 73 to 106 is disordered; the sequence is GGVAGGEAGEAEAEKEEEEAKEESDDDMGFGLFD. A compositionally biased stretch (acidic residues) spans 81-100; the sequence is GEAEAEKEEEEAKEESDDDM. Ser-96 carries the post-translational modification Phosphoserine.

The protein belongs to the eukaryotic ribosomal protein P1/P2 family. Component of the large ribosomal subunit (LSU). Mature yeast ribosomes consist of a small (40S) and a large (60S) subunit. The 40S small subunit contains 1 molecule of ribosomal RNA (18S rRNA) and 33 different proteins (encoded by 57 genes). The large 60S subunit contains 3 rRNA molecules (25S, 5.8S and 5S rRNA) and 46 different proteins (encoded by 81 genes). The 5 acidic ribosomal P-proteins form the stalk structure of the 60S subunit. They are organized as a pentameric complex in which uL10/P0 interacts with 2 heterodimers, P1A-P2B and P1B-P2A. In terms of processing, N-terminally acetylated by acetyltransferase NatA.

The protein resides in the cytoplasm. Component of the ribosome, a large ribonucleoprotein complex responsible for the synthesis of proteins in the cell. The small ribosomal subunit (SSU) binds messenger RNAs (mRNAs) and translates the encoded message by selecting cognate aminoacyl-transfer RNA (tRNA) molecules. The large subunit (LSU) contains the ribosomal catalytic site termed the peptidyl transferase center (PTC), which catalyzes the formation of peptide bonds, thereby polymerizing the amino acids delivered by tRNAs into a polypeptide chain. The nascent polypeptides leave the ribosome through a tunnel in the LSU and interact with protein factors that function in enzymatic processing, targeting, and the membrane insertion of nascent chains at the exit of the ribosomal tunnel. This is Large ribosomal subunit protein P1A from Saccharomyces cerevisiae (strain ATCC 204508 / S288c) (Baker's yeast).